The following is a 349-amino-acid chain: Phloroglucinol synthase (349 aa).

Cysteine 138 is a catalytic residue.

The protein belongs to the thiolase-like superfamily. Chalcone/stilbene synthases family.

The enzyme catalyses 3 malonyl-CoA + 3 H(+) = 1,3,5-trihydroxybenzene + 3 CO2 + 3 CoA. It functions in the pathway antibiotic biosynthesis. Functionally, type III polyketide synthase that catalyzes the synthesis of phloroglucinol from three molecules of malonyl-CoA. In addition to its ability to produce phloroglucinol from malonyl-CoA, it exhibits broad substrate specificity, accepting C4-C12 aliphatic acyl-CoAs and phenylacetyl-CoA as the starters to form C6-polyoxoalkylated alpha-pyrones from sequential condensation with malonyl-CoA. The protein is Phloroglucinol synthase of Pseudomonas fluorescens (strain ATCC BAA-477 / NRRL B-23932 / Pf-5).